The sequence spans 108 residues: T cell receptor alpha variable 1-1 (108 aa).

Residues 1 to 18 form the signal peptide; the sequence is MWGAFLLYVSMKMGGTAG. In terms of domain architecture, Ig-like spans 19 to 108; the sequence is QSLEQPSEVT…DSASYFCAVR (90 aa). N-linked (GlcNAc...) asparagine glycosylation is present at asparagine 38. Cysteines 39 and 105 form a disulfide.

In terms of assembly, alpha-beta TR is a heterodimer composed of an alpha and beta chain; disulfide-linked. The alpha-beta TR is associated with the transmembrane signaling CD3 coreceptor proteins to form the TR-CD3 (TcR or TCR). The assembly of alpha-beta TR heterodimers with CD3 occurs in the endoplasmic reticulum where a single alpha-beta TR heterodimer associates with one CD3D-CD3E heterodimer, one CD3G-CD3E heterodimer and one CD247 homodimer forming a stable octameric structure. CD3D-CD3E and CD3G-CD3E heterodimers preferentially associate with TR alpha and TR beta chains, respectively. The association of the CD247 homodimer is the last step of TcR assembly in the endoplasmic reticulum and is required for transport to the cell surface.

Its subcellular location is the cell membrane. Its function is as follows. V region of the variable domain of T cell receptor (TR) alpha chain that participates in the antigen recognition. Alpha-beta T cell receptors are antigen specific receptors which are essential to the immune response and are present on the cell surface of T lymphocytes. Recognize peptide-major histocompatibility (MH) (pMH) complexes that are displayed by antigen presenting cells (APC), a prerequisite for efficient T cell adaptive immunity against pathogens. Binding of alpha-beta TR to pMH complex initiates TR-CD3 clustering on the cell surface and intracellular activation of LCK that phosphorylates the ITAM motifs of CD3G, CD3D, CD3E and CD247 enabling the recruitment of ZAP70. In turn ZAP70 phosphorylates LAT, which recruits numerous signaling molecules to form the LAT signalosome. The LAT signalosome propagates signal branching to three major signaling pathways, the calcium, the mitogen-activated protein kinase (MAPK) kinase and the nuclear factor NF-kappa-B (NF-kB) pathways, leading to the mobilization of transcription factors that are critical for gene expression and essential for T cell growth and differentiation. The T cell repertoire is generated in the thymus, by V-(D)-J rearrangement. This repertoire is then shaped by intrathymic selection events to generate a peripheral T cell pool of self-MH restricted, non-autoaggressive T cells. Post-thymic interaction of alpha-beta TR with the pMH complexes shapes TR structural and functional avidity. This is T cell receptor alpha variable 1-1 from Homo sapiens (Human).